A 544-amino-acid polypeptide reads, in one-letter code: CTP synthase (544 aa).

The amidoligase domain stretch occupies residues 1-267; the sequence is MTKFVFVTGG…AQRVLEILNL (267 aa). Ser-13 contacts CTP. Ser-13 is a UTP binding site. 14–19 contacts ATP; it reads SIGKGI. Residue Tyr-54 coordinates L-glutamine. Residue Asp-71 participates in ATP binding. Mg(2+) is bound by residues Asp-71 and Glu-141. CTP-binding positions include 148–150, 188–193, and Lys-224; these read DIE and KTKPTQ. Residues 188 to 193 and Lys-224 contribute to the UTP site; that span reads KTKPTQ. The 243-residue stretch at 292–534 folds into the Glutamine amidotransferase type-1 domain; that stretch reads EIAIVGKYVR…IEAALRSRPQ (243 aa). Gly-354 lines the L-glutamine pocket. The active-site Nucleophile; for glutamine hydrolysis is the Cys-381. Residues 382-385, Glu-405, and Arg-462 contribute to the L-glutamine site; that span reads LGMQ. Active-site residues include His-507 and Glu-509.

This sequence belongs to the CTP synthase family. Homotetramer.

It carries out the reaction UTP + L-glutamine + ATP + H2O = CTP + L-glutamate + ADP + phosphate + 2 H(+). The catalysed reaction is L-glutamine + H2O = L-glutamate + NH4(+). It catalyses the reaction UTP + NH4(+) + ATP = CTP + ADP + phosphate + 2 H(+). The protein operates within pyrimidine metabolism; CTP biosynthesis via de novo pathway; CTP from UDP: step 2/2. Its activity is regulated as follows. Allosterically activated by GTP, when glutamine is the substrate; GTP has no effect on the reaction when ammonia is the substrate. The allosteric effector GTP functions by stabilizing the protein conformation that binds the tetrahedral intermediate(s) formed during glutamine hydrolysis. Inhibited by the product CTP, via allosteric rather than competitive inhibition. Catalyzes the ATP-dependent amination of UTP to CTP with either L-glutamine or ammonia as the source of nitrogen. Regulates intracellular CTP levels through interactions with the four ribonucleotide triphosphates. The polypeptide is CTP synthase (Synechococcus sp. (strain JA-2-3B'a(2-13)) (Cyanobacteria bacterium Yellowstone B-Prime)).